Here is a 175-residue protein sequence, read N- to C-terminus: Regenerating islet-derived protein 3-beta (175 aa).

Residues 1–26 form the signal peptide; the sequence is MLHRLAFPVMSWMLLSCLMLLSQVQG. Residues 27 to 37 constitute a propeptide that is removed on maturation; sequence EDSPKKIPSAR. Disulfide bonds link Cys-40–Cys-51, Cys-68–Cys-171, and Cys-146–Cys-163. Residues 47–172 enclose the C-type lectin domain; the sequence is YGSYCYALFQ…CEVKLPYVCK (126 aa). His-107 lines the Zn(2+) pocket. An EPN motif is present at residues 114–116; that stretch reads EPN. Residue Glu-121 coordinates Zn(2+).

Forms a hexameric membrane-permeabilizing oligomeric pore on membrane phospholipids. The hexamer is formed by three dimers related by helical symmetry. Forms filaments, filamentation traps pore complexes and limits damage to host cells. Interacts with EXTL3. In terms of processing, proteolytic processing by trypsin removes an inhibitory N-terminal propeptide and is essential for peptidoglycan binding and antibacterial activity. In terms of tissue distribution, constitutively expressed in intestine.

The protein resides in the secreted. With respect to regulation, lipopolysaccharide inhibits pore-forming activity, explaining why is bactericidal for Gram-positive but not Gram-negative bacteria. Functionally, bactericidal C-type lectin which acts against several intestinal Gram-positive bacteria and Gram-negative bacteria. Lacks antibacterial activity against S.typhimurium. May play a role in protection against infection with S.enteritidis by inhibiting its translocation from the gut lumen into intestinal tissues and further extraintestinal tissues. Acts as a hormone in response to different stimuli. Secreted by different cell types to activate its receptor EXTL3 and induce cell specific signaling pathways. In pancreas, is able stimulate cell proliferation. The polypeptide is Regenerating islet-derived protein 3-beta (Rattus norvegicus (Rat)).